The following is a 230-amino-acid chain: Orotidine 5'-phosphate decarboxylase (230 aa).

Substrate is bound by residues Asp10, Lys32, 59–68 (DLKYHDIPNT), Thr119, Arg180, Gln189, Gly209, and Arg210. The active-site Proton donor is the Lys61.

It belongs to the OMP decarboxylase family. Type 1 subfamily. In terms of assembly, homodimer.

It carries out the reaction orotidine 5'-phosphate + H(+) = UMP + CO2. It functions in the pathway pyrimidine metabolism; UMP biosynthesis via de novo pathway; UMP from orotate: step 2/2. Functionally, catalyzes the decarboxylation of orotidine 5'-monophosphate (OMP) to uridine 5'-monophosphate (UMP). This Haemophilus influenzae (strain PittEE) protein is Orotidine 5'-phosphate decarboxylase.